The following is a 4574-amino-acid chain: E3 ubiquitin-protein ligase MYCBP2 (4574 aa).

Disordered regions lie at residues 92-115 (RGKK…VKTR) and 599-620 (SASK…PYKP). RCC1 repeat units lie at residues 591 to 646 (DGSV…IVTK), 690 to 746 (SGEV…MMCQ), 943 to 993 (NGDV…VLLM), and 995 to 1051 (GQVF…LRID). Positions 611-620 (SRRQPKPYKP) are enriched in basic residues. A disulfide bond links C1733 and C1850. Disordered stretches follow at residues 1976–1998 (APPT…EQGL) and 2313–2332 (LQRL…LTFG). 2 stretches are compositionally biased toward polar residues: residues 1981–1998 (NPNQ…EQGL) and 2317–2328 (PGTSSNSATGTD). Residues 2336-2417 (APKLEATYEP…IHVTIDGIEI (82 aa)) form a Filamin repeat. 5 disordered regions span residues 2613 to 2824 (GFDY…PSPH), 2845 to 2922 (SNDE…KQAM), 3085 to 3116 (SPGS…KAEV), 3345 to 3365 (PGSN…TDSD), and 3505 to 3526 (FETE…EQEK). Composition is skewed to basic and acidic residues over residues 2639–2663 (HRQE…KSKN) and 2678–2688 (DTGKLRSDSHS). Polar residues predominate over residues 2716–2729 (NPGSRSSSPKQKTF). A compositionally biased stretch (low complexity) spans 2730-2745 (TSGRSSPSSTSSPRSS). 3 stretches are compositionally biased toward basic and acidic residues: residues 2761-2772 (VHLDPPRERSKS), 2854-2864 (SELHNAEEGSS), and 2874-2883 (PVKEELESRS). Composition is skewed to basic residues over residues 2887 to 2900 (VSRK…RPKK) and 3102 to 3111 (KKTKKEKKKK). The span at 3515 to 3526 (NKGNKENLEQEK) shows a compositional bias: basic and acidic residues. In terms of domain architecture, DOC spans 3617 to 3795 (FNISVQSGYE…SVAQQKNCEA (179 aa)). The segment at 3815–3841 (GDAEPTPEQEEKNLLSSPEGEDKAPSD) is disordered. Positions 4324, 4327, 4342, 4344, 4347, 4350, 4371, 4374, 4440, and 4443 each coordinate Zn(2+). The RING-type; atypical zinc-finger motif lies at 4324-4375 (CMICFTEALSAAPAIQLDCSHVFHLQCTRRVLENRWLGPRITFGFMSCPICK). Positions 4435–4572 (YAYYVCFKCK…LGCGVCRNAH (138 aa)) are tandem cysteine domain. Residue C4454 is part of the active site. Zn(2+)-binding residues include C4471, C4474, C4483, H4486, C4495, C4498, and C4499. Residue C4506 is part of the active site. Zn(2+)-binding residues include C4513, C4516, C4534, C4548, H4554, C4565, and C4568.

The protein belongs to the RING-Cys relay (RCR) family. Widely expressed when the visual system begins developing. In the eye, expressed in all cells, including retinal ganglion cells, with no obvious gradient.

It is found in the nucleus. The protein resides in the cell projection. The protein localises to the axon. It localises to the cytoplasm. Its subcellular location is the cytoskeleton. The enzyme catalyses [E2 ubiquitin-conjugating enzyme]-S-ubiquitinyl-L-cysteine + [acceptor protein]-L-threonine = [E2 ubiquitin-conjugating enzyme]-L-cysteine + [acceptor protein]-3-O-ubiquitinyl-L-threonine.. It participates in protein modification; protein ubiquitination. In terms of biological role, atypical E3 ubiquitin-protein ligase which specifically mediates ubiquitination of threonine and serine residues on target proteins, instead of ubiquitinating lysine residues. Shows esterification activity towards both threonine and serine, with a preference for threonine, and acts via two essential catalytic cysteine residues that relay ubiquitin to its substrate via thioester intermediates. Interacts with the E2 enzymes UBE2D1, UBE2D3, UBE2E1 and UBE2L3. Plays a key role in neural development, probably by mediating ubiquitination of threonine residues on target proteins. Involved in different processes such as regulation of neurite outgrowth, synaptic growth, synaptogenesis and axon degeneration. Required in the visual system for correct fasciculation, targeting and mapping of retinal axons. Acts as a regulator of pteridine synthesis. May play a role in the regulation of the circadian clock gene expression. In Danio rerio (Zebrafish), this protein is E3 ubiquitin-protein ligase MYCBP2.